The sequence spans 428 residues: 5'-deoxyadenosine deaminase (428 aa).

Residues histidine 59 and histidine 61 each coordinate Zn(2+). Glutamate 88 and histidine 180 together coordinate substrate. Residue histidine 207 coordinates Zn(2+). 2 residues coordinate substrate: glutamate 210 and aspartate 296. Aspartate 296 provides a ligand contact to Zn(2+).

This sequence belongs to the metallo-dependent hydrolases superfamily. MTA/SAH deaminase family. In terms of assembly, homotetramer. The cofactor is Zn(2+).

It carries out the reaction 5'-deoxyadenosine + H2O + H(+) = 5'-deoxyinosine + NH4(+). The catalysed reaction is S-adenosyl-L-homocysteine + H2O + H(+) = S-inosyl-L-homocysteine + NH4(+). The enzyme catalyses S-methyl-5'-thioadenosine + H2O + H(+) = S-methyl-5'-thioinosine + NH4(+). It catalyses the reaction adenosine + H2O + H(+) = inosine + NH4(+). The protein operates within amino-acid biosynthesis; S-adenosyl-L-methionine biosynthesis. In terms of biological role, catalyzes the deamination of three SAM-derived enzymatic products, namely 5'-deoxyadenosine, S-adenosyl-L-homocysteine, and 5'-methylthioadenosine, to produce the inosine analogs. Can also deaminate adenosine. The preferred substrate for this enzyme is 5'-deoxyadenosine, but all these substrates are efficiently deaminated. Likely functions in a S-adenosyl-L-methionine (SAM) recycling pathway from S-adenosyl-L-homocysteine (SAH) produced from SAM-dependent methylation reactions. May also be involved in the recycling of 5'-deoxyadenosine, whereupon the 5'-deoxyribose moiety of 5'-deoxyinosine is further metabolized to deoxyhexoses used for the biosynthesis of aromatic amino acids in methanogens. The chain is 5'-deoxyadenosine deaminase from Methanococcus aeolicus (strain ATCC BAA-1280 / DSM 17508 / OCM 812 / Nankai-3).